Reading from the N-terminus, the 312-residue chain is Probable deoxyhypusine synthase (312 aa).

K285 acts as the Nucleophile in catalysis.

It belongs to the deoxyhypusine synthase family. NAD(+) serves as cofactor.

The enzyme catalyses [eIF5A protein]-L-lysine + spermidine = [eIF5A protein]-deoxyhypusine + propane-1,3-diamine. The protein operates within protein modification; eIF5A hypusination. Catalyzes the NAD-dependent oxidative cleavage of spermidine and the subsequent transfer of the butylamine moiety of spermidine to the epsilon-amino group of a specific lysine residue of the eIF-5A precursor protein to form the intermediate deoxyhypusine residue. In Saccharolobus islandicus (strain Y.N.15.51 / Yellowstone #2) (Sulfolobus islandicus), this protein is Probable deoxyhypusine synthase.